The following is a 622-amino-acid chain: Low affinity potassium transport system protein Kup (622 aa).

12 helical membrane passes run 9–29 (LSAV…TSPL), 46–66 (PDVV…VVSV), 101–121 (ILVV…VITP), 137–157 (PALD…LFVI), 165–185 (VGKL…LLGL), 213–233 (VSFF…ALYA), 247–267 (WFTV…ALLL), 276–296 (PFFL…ATLA), 337–357 (IYIP…IIGF), 363–383 (LAAA…ILFC), 395–415 (FLVV…FSAN), and 416–436 (VLKL…MFII).

It belongs to the HAK/KUP transporter (TC 2.A.72) family.

It is found in the cell inner membrane. The catalysed reaction is K(+)(in) + H(+)(in) = K(+)(out) + H(+)(out). Its function is as follows. Responsible for the low-affinity transport of potassium into the cell. Likely operates as a K(+):H(+) symporter. The chain is Low affinity potassium transport system protein Kup from Yersinia pestis bv. Antiqua (strain Antiqua).